We begin with the raw amino-acid sequence, 725 residues long: 1,4-alpha-glucan branching enzyme GlgB (725 aa).

Aspartate 406 (nucleophile) is an active-site residue. Glutamate 459 (proton donor) is an active-site residue.

The protein belongs to the glycosyl hydrolase 13 family. GlgB subfamily. Monomer.

It carries out the reaction Transfers a segment of a (1-&gt;4)-alpha-D-glucan chain to a primary hydroxy group in a similar glucan chain.. The protein operates within glycan biosynthesis; glycogen biosynthesis. In terms of biological role, catalyzes the formation of the alpha-1,6-glucosidic linkages in glycogen by scission of a 1,4-alpha-linked oligosaccharide from growing alpha-1,4-glucan chains and the subsequent attachment of the oligosaccharide to the alpha-1,6 position. The protein is 1,4-alpha-glucan branching enzyme GlgB of Methylobacillus flagellatus (strain ATCC 51484 / DSM 6875 / VKM B-1610 / KT).